Reading from the N-terminus, the 129-residue chain is NADPH-dependent 7-cyano-7-deazaguanine reductase (129 aa).

The active-site Thioimide intermediate is the Cys34. Residue Asp41 is the Proton donor of the active site. Residues 56–58 and 75–76 each bind substrate; these read VEL and HE.

Belongs to the GTP cyclohydrolase I family. QueF type 1 subfamily.

It is found in the cytoplasm. It carries out the reaction 7-aminomethyl-7-carbaguanine + 2 NADP(+) = 7-cyano-7-deazaguanine + 2 NADPH + 3 H(+). It functions in the pathway tRNA modification; tRNA-queuosine biosynthesis. In terms of biological role, catalyzes the NADPH-dependent reduction of 7-cyano-7-deazaguanine (preQ0) to 7-aminomethyl-7-deazaguanine (preQ1). This is NADPH-dependent 7-cyano-7-deazaguanine reductase from Thioalkalivibrio sulfidiphilus (strain HL-EbGR7).